The chain runs to 614 residues: Selenocysteine-specific elongation factor (614 aa).

The 173-residue stretch at 1 to 173 (MIIATAGHVD…LPEREHASQH (173 aa)) folds into the tr-type G domain. Residues 7–14 (GHVDHGKT) are G1. 7–14 (GHVDHGKT) is a GTP binding site. Positions 35 to 39 (GMTID) are G2. The segment at 57-60 (DVPG) is G3. Residues 57–61 (DVPGH) and 112–115 (TKAD) each bind GTP. The G4 stretch occupies residues 112–115 (TKAD). The interval 147-149 (AAT) is G5.

This sequence belongs to the TRAFAC class translation factor GTPase superfamily. Classic translation factor GTPase family. SelB subfamily.

It localises to the cytoplasm. In terms of biological role, translation factor necessary for the incorporation of selenocysteine into proteins. It probably replaces EF-Tu for the insertion of selenocysteine directed by the UGA codon. SelB binds GTP and GDP. The polypeptide is Selenocysteine-specific elongation factor (selB) (Escherichia coli (strain K12)).